Consider the following 510-residue polypeptide: F-box only protein 15 (510 aa).

Residues methionine 77–isoleucine 117 form the F-box domain.

As to quaternary structure, directly interacts with SKP1 and CUL1.

Substrate-recognition component of the SCF (SKP1-CUL1-F-box protein)-type E3 ubiquitin ligase complex. The polypeptide is F-box only protein 15 (FBXO15) (Homo sapiens (Human)).